A 254-amino-acid chain; its full sequence is MIIVISPAKSQNFETATAKYQFTQPIFKDQITKLINTLKHYEVDEIEKLMKISPKLAEEVFTKHNNFDPKSYSELNSKAAIFTFSGDVYKGLEADTLDKKTIEYAQNHLLMLSGLYGLIRPLDLMQAYRLEMGTKIKIDGEILYKYWQDKITAQLNEYFNQQQNKILINLASNEYSQAIDKKSLDAKWLDIDFKENKNGTYKTIGIHAKKARGLMTRYILENRIENISDIKKFNVADYKFNLELSNENLMCFTR.

This sequence belongs to the UPF0246 family.

The sequence is that of UPF0246 protein Fphi_1075 from Francisella philomiragia subsp. philomiragia (strain ATCC 25017 / CCUG 19701 / FSC 153 / O#319-036).